Consider the following 149-residue polypeptide: Protein SprT-like (149 aa).

The region spanning 4 to 143 is the SprT-like domain; sequence TDYVKQVSLE…CGLCRGKLLL (140 aa). Histidine 64 contributes to the Zn(2+) binding site. Glutamate 65 is an active-site residue. Zn(2+) is bound at residue histidine 68.

This sequence belongs to the SprT family. It depends on Zn(2+) as a cofactor.

The protein localises to the cytoplasm. The chain is Protein SprT-like from Streptococcus pneumoniae (strain Taiwan19F-14).